The primary structure comprises 471 residues: Proline--tRNA ligase (471 aa).

It belongs to the class-II aminoacyl-tRNA synthetase family. ProS type 3 subfamily. Homodimer.

The protein localises to the cytoplasm. The catalysed reaction is tRNA(Pro) + L-proline + ATP = L-prolyl-tRNA(Pro) + AMP + diphosphate. Catalyzes the attachment of proline to tRNA(Pro) in a two-step reaction: proline is first activated by ATP to form Pro-AMP and then transferred to the acceptor end of tRNA(Pro). This is Proline--tRNA ligase from Archaeoglobus fulgidus (strain ATCC 49558 / DSM 4304 / JCM 9628 / NBRC 100126 / VC-16).